The sequence spans 276 residues: Large ribosomal subunit protein uL2 (276 aa).

Disordered regions lie at residues 14–58 and 219–276; these read RNAS…GGGH and PITR…KNRK. A compositionally biased stretch (polar residues) spans 16-27; the sequence is ASVSDFSELTRS. The span at 255 to 276 shows a compositional bias: basic residues; it reads RRPKKASNKMIVRRRPSGKNRK.

The protein belongs to the universal ribosomal protein uL2 family. Part of the 50S ribosomal subunit. Forms a bridge to the 30S subunit in the 70S ribosome.

In terms of biological role, one of the primary rRNA binding proteins. Required for association of the 30S and 50S subunits to form the 70S ribosome, for tRNA binding and peptide bond formation. It has been suggested to have peptidyltransferase activity; this is somewhat controversial. Makes several contacts with the 16S rRNA in the 70S ribosome. The sequence is that of Large ribosomal subunit protein uL2 from Bifidobacterium longum (strain DJO10A).